The sequence spans 882 residues: Valine--tRNA ligase (882 aa).

Residues 42 to 52 carry the 'HIGH' region motif; the sequence is PNVTGKLHLGH. The 'KMSKS' region motif lies at 522-526; the sequence is KMSKS. Lys525 serves as a coordination point for ATP. The stretch at 849 to 873 forms a coiled coil; it reads KIEIEKKKYESYCKQYKKLLESKNN.

Belongs to the class-I aminoacyl-tRNA synthetase family. ValS type 1 subfamily. As to quaternary structure, monomer.

The protein resides in the cytoplasm. The enzyme catalyses tRNA(Val) + L-valine + ATP = L-valyl-tRNA(Val) + AMP + diphosphate. In terms of biological role, catalyzes the attachment of valine to tRNA(Val). As ValRS can inadvertently accommodate and process structurally similar amino acids such as threonine, to avoid such errors, it has a 'posttransfer' editing activity that hydrolyzes mischarged Thr-tRNA(Val) in a tRNA-dependent manner. In Onion yellows phytoplasma (strain OY-M), this protein is Valine--tRNA ligase.